We begin with the raw amino-acid sequence, 110 residues long: Hydrogenase maturation factor HypA (110 aa).

His-2 provides a ligand contact to Ni(2+). Zn(2+) is bound by residues Cys-70, Cys-73, Cys-86, and Cys-89.

Belongs to the HypA/HybF family.

Its function is as follows. Involved in the maturation of [NiFe] hydrogenases. Required for nickel insertion into the metal center of the hydrogenase. In Geotalea daltonii (strain DSM 22248 / JCM 15807 / FRC-32) (Geobacter daltonii), this protein is Hydrogenase maturation factor HypA.